A 217-amino-acid polypeptide reads, in one-letter code: Dephospho-CoA kinase (217 aa).

One can recognise a DPCK domain in the interval 4–203 (IVALTGGISS…SHLSRIYNKN (200 aa)). 12–17 (SSGKTT) provides a ligand contact to ATP.

Belongs to the CoaE family.

The protein resides in the cytoplasm. It carries out the reaction 3'-dephospho-CoA + ATP = ADP + CoA + H(+). It functions in the pathway cofactor biosynthesis; coenzyme A biosynthesis; CoA from (R)-pantothenate: step 5/5. Its function is as follows. Catalyzes the phosphorylation of the 3'-hydroxyl group of dephosphocoenzyme A to form coenzyme A. The protein is Dephospho-CoA kinase of Buchnera aphidicola subsp. Acyrthosiphon pisum (strain APS) (Acyrthosiphon pisum symbiotic bacterium).